The sequence spans 133 residues: Transcription antitermination protein NusB (133 aa).

This sequence belongs to the NusB family.

Functionally, involved in transcription antitermination. Required for transcription of ribosomal RNA (rRNA) genes. Binds specifically to the boxA antiterminator sequence of the ribosomal RNA (rrn) operons. The chain is Transcription antitermination protein NusB from Pediococcus pentosaceus (strain ATCC 25745 / CCUG 21536 / LMG 10740 / 183-1w).